Consider the following 451-residue polypeptide: Phosphoglucosamine mutase (451 aa).

Residue serine 104 is the Phosphoserine intermediate of the active site. Mg(2+) is bound by residues serine 104, aspartate 249, aspartate 251, and aspartate 253. Serine 104 is modified (phosphoserine).

It belongs to the phosphohexose mutase family. Mg(2+) serves as cofactor. In terms of processing, activated by phosphorylation.

The enzyme catalyses alpha-D-glucosamine 1-phosphate = D-glucosamine 6-phosphate. In terms of biological role, catalyzes the conversion of glucosamine-6-phosphate to glucosamine-1-phosphate. This is Phosphoglucosamine mutase from Psychrobacter sp. (strain PRwf-1).